The primary structure comprises 274 residues: MRKVAIYGKGGIGKSTTTQNTVAALAEMGKKVMVVGCDPKADSTRLLLGGLQQKTVLDTLREEGEEVELEDIIKGGYKNTRCTESGGPEPGVGCAGRGIITSVNLLEQLGAYDDEWELDYVFYDVLGDVVCGGFAMPIRDGKAEEIYIVCSGEMMAMYAANNICKGILKYADAGGVRLGGLICNSRQVENEKAMIEELARKIGTQMIHFVPRDNFVQRAEINRKTVIDYDPTHKQADEYRALAQKINDNKMFVIPKPLEIEELESLLIEFGIAN.

Position 8–15 (8–15 (GKGGIGKS)) interacts with ATP. [4Fe-4S] cluster is bound at residue Cys-94. Arg-97 carries the ADP-ribosylarginine; by dinitrogenase reductase ADP-ribosyltransferase modification. Cys-131 provides a ligand contact to [4Fe-4S] cluster.

The protein belongs to the NifH/BchL/ChlL family. In terms of assembly, homodimer. Requires [4Fe-4S] cluster as cofactor. The reversible ADP-ribosylation of Arg-97 inactivates the nitrogenase reductase and regulates nitrogenase activity.

The catalysed reaction is N2 + 8 reduced [2Fe-2S]-[ferredoxin] + 16 ATP + 16 H2O = H2 + 8 oxidized [2Fe-2S]-[ferredoxin] + 2 NH4(+) + 16 ADP + 16 phosphate + 6 H(+). The key enzymatic reactions in nitrogen fixation are catalyzed by the nitrogenase complex, which has 2 components: the iron protein and the molybdenum-iron protein. The chain is Nitrogenase iron protein from Chlorobium phaeovibrioides (strain DSM 265 / 1930) (Prosthecochloris vibrioformis (strain DSM 265)).